Reading from the N-terminus, the 359-residue chain is MEKSMYNSLKSILDKYQELNQELLKPEVLSDIKLYKKFSRELNSIKSISEEFSKYLNYEKTIESSKIILAQEKDEELISLAKKEILECEEKMSSLVEELKILLLPKDKNDELDVIMEIRGAAGGDEANIFAGDLFEMYSKWANNNNMKVSVLDRNYATSGGFTLIVFTISGEKAYSKLKFESGVHRVQRIPVTESKGRVHTSTATVTAMPEIDDDIEVEINPSDLKIDTFRSSGAGGQSVNTTDSAVRITHIPTGIISSSQEGRSQISNRELALKILKAKLYDHENQKKLEKVGQYRKLAGSGARSEKIRTYNYPQDRVTDHRINFSSSLKQIMEGKLQIIIDSLLAEEQAEKIKEVGI.

At Gln-238 the chain carries N5-methylglutamine.

Belongs to the prokaryotic/mitochondrial release factor family. Post-translationally, methylated by PrmC. Methylation increases the termination efficiency of RF1.

It localises to the cytoplasm. Functionally, peptide chain release factor 1 directs the termination of translation in response to the peptide chain termination codons UAG and UAA. This chain is Peptide chain release factor 1, found in Mycoplasmopsis pulmonis (strain UAB CTIP) (Mycoplasma pulmonis).